The sequence spans 248 residues: PACRG-like protein (248 aa).

Residue methionine 1 is modified to N-acetylmethionine. A compositionally biased stretch (polar residues) spans 1 to 29; sequence MQKSEGSGGTQLKNRATGNYDQRTSSSTQ. Residues 1 to 71 form a disordered region; it reads MQKSEGSGGT…LNPKTINPFG (71 aa). The span at 39–49 shows a compositional bias: low complexity; sequence SKSSLSTSSPE. The residue at position 47 (serine 47) is a Phosphoserine.

The chain is PACRG-like protein (PACRGL) from Homo sapiens (Human).